The chain runs to 457 residues: tRNA modification GTPase MnmE (457 aa).

(6S)-5-formyl-5,6,7,8-tetrahydrofolate-binding residues include Arg25, Glu87, and Arg126. The TrmE-type G domain occupies Gly223–Phe377. Residue Asn233 coordinates K(+). GTP-binding positions include Asn233–Ser238, Thr252–Thr258, and Asp277–Gly280. Ser237 is a Mg(2+) binding site. Thr252, Ile254, and Thr257 together coordinate K(+). Mg(2+) is bound at residue Thr258. Lys457 is a (6S)-5-formyl-5,6,7,8-tetrahydrofolate binding site.

It belongs to the TRAFAC class TrmE-Era-EngA-EngB-Septin-like GTPase superfamily. TrmE GTPase family. As to quaternary structure, homodimer. Heterotetramer of two MnmE and two MnmG subunits. K(+) is required as a cofactor.

The protein resides in the cytoplasm. Exhibits a very high intrinsic GTPase hydrolysis rate. Involved in the addition of a carboxymethylaminomethyl (cmnm) group at the wobble position (U34) of certain tRNAs, forming tRNA-cmnm(5)s(2)U34. The sequence is that of tRNA modification GTPase MnmE from Streptococcus suis (strain 98HAH33).